Consider the following 418-residue polypeptide: Actin-related protein 3-B (418 aa).

It belongs to the actin family. ARP3 subfamily. Component of the Arp2/3 complex composed of actr2/arp2, actr3/arp3, arpc1 (arpc1a or arpc1b), arpc2, arpc3, arpc4 and arpc5.

The protein localises to the cytoplasm. It is found in the cytoskeleton. Its subcellular location is the cell projection. The protein resides in the nucleus. In terms of biological role, ATP-binding component of the Arp2/3 complex, a multiprotein complex that mediates actin polymerization upon stimulation by nucleation-promoting factor (NPF). The Arp2/3 complex mediates the formation of branched actin networks in the cytoplasm, providing the force for cell motility. Seems to contact the pointed end of the daughter actin filament. In addition to its role in the cytoplasmic cytoskeleton, the Arp2/3 complex also promotes actin polymerization in the nucleus, thereby regulating gene transcription and repair of damaged DNA. The Arp2/3 complex promotes homologous recombination (HR) repair in response to DNA damage by promoting nuclear actin polymerization, leading to drive motility of double-strand breaks (DSBs). The polypeptide is Actin-related protein 3-B (actr3-b) (Xenopus laevis (African clawed frog)).